Consider the following 157-residue polypeptide: 2-C-methyl-D-erythritol 2,4-cyclodiphosphate synthase (157 aa).

Positions 8 and 10 each coordinate a divalent metal cation. Residues 8–10 (DVH) and 34–35 (HS) each bind 4-CDP-2-C-methyl-D-erythritol 2-phosphate. An a divalent metal cation-binding site is contributed by His42. 4-CDP-2-C-methyl-D-erythritol 2-phosphate is bound by residues 56 to 58 (DIG), 61 to 65 (FPDTD), 100 to 106 (AQAPKMA), 132 to 135 (TTTE), Phe139, and Arg142.

Belongs to the IspF family. In terms of assembly, homotrimer. The cofactor is a divalent metal cation.

It carries out the reaction 4-CDP-2-C-methyl-D-erythritol 2-phosphate = 2-C-methyl-D-erythritol 2,4-cyclic diphosphate + CMP. Its pathway is isoprenoid biosynthesis; isopentenyl diphosphate biosynthesis via DXP pathway; isopentenyl diphosphate from 1-deoxy-D-xylulose 5-phosphate: step 4/6. Its function is as follows. Involved in the biosynthesis of isopentenyl diphosphate (IPP) and dimethylallyl diphosphate (DMAPP), two major building blocks of isoprenoid compounds. Catalyzes the conversion of 4-diphosphocytidyl-2-C-methyl-D-erythritol 2-phosphate (CDP-ME2P) to 2-C-methyl-D-erythritol 2,4-cyclodiphosphate (ME-CPP) with a corresponding release of cytidine 5-monophosphate (CMP). The sequence is that of 2-C-methyl-D-erythritol 2,4-cyclodiphosphate synthase from Stutzerimonas stutzeri (strain A1501) (Pseudomonas stutzeri).